We begin with the raw amino-acid sequence, 202 residues long: Peptide deformylase (202 aa).

Positions 1 to 24 (MAGSFAQLAKNAEKKKPSISVSKE) are disordered. 2 residues coordinate Fe cation: Cys-121 and His-163. Glu-164 is a catalytic residue. His-167 is a Fe cation binding site.

It belongs to the polypeptide deformylase family. It depends on Fe(2+) as a cofactor.

It catalyses the reaction N-terminal N-formyl-L-methionyl-[peptide] + H2O = N-terminal L-methionyl-[peptide] + formate. Functionally, removes the formyl group from the N-terminal Met of newly synthesized proteins. Requires at least a dipeptide for an efficient rate of reaction. N-terminal L-methionine is a prerequisite for activity but the enzyme has broad specificity at other positions. The chain is Peptide deformylase from Prochlorococcus marinus (strain NATL1A).